Here is an 820-residue protein sequence, read N- to C-terminus: MNESYQPTLIEQLAQEYWEENETFEVKEDLSREKFYCLSMLPYPSGDLHMGHVRNYTIGDVIARYQIHKGRNVLQPMGWDAFGLPAENAAIQRELPPAEWTRKNIKKMRKQLKQLGFAYDWSREITTCDSTYYRWEQWLFLQLYKKGLAYKKNAIVNWDPVDQTVLANEQIVDGRGWRSGAVVERREISQWFLKITDYSEELLKDLDELKEWPEQVITMQRNWIGQSQGVIINFNLEKGPDKLQVYTTRPDTLMGVTYLAIAPEHPLAKERAKKSKKIAAFLKKCKQTRVAEADIATQEKEGIDSGLFAVHPLSKEKLPIWIANFVLMEYASGVVMAVPAHDERDHEFALKYDLPLKPVIEPADGHDWDYNQAAYTNPGKLINSGSFNDIDSKTAFNVIADYLKNNGAGSRQTHYRLRDWGISRQRYWGTPIPIIYCKTCGTVPVPENQLPVLLPEDIIPTGHGSPLKETASFYKTRCPVCNKPATRETDTMDTFVESSWYYARYSCPDQDKVMLDDRAKYWTPVDQYIGGIEHAVMHLLYARFMHKILRDLGLLNSNEPFIRLLTQGMVLKDGAKMSKSKGNVVTPQSLIKKYGADTVRLFIIFAAPPEQDLEWSDSGVEGAYRFLKKLWGFSYRIKDALLAVNQQKERSNYQWEAPEHRQTRQQIHECLQQANIDMERLQFNTVVSAVMKILNILIKLTTDNDAEAHLIREGTGILLRLLSPITPHISHHLWQSLGFGGDILDTPWPRPDPKALQTTELELIVQINGKLRGRIQVPTEASKEIIESTALNQENVQRHLADKKIKKVIVVPKKLINIVV.

Positions 42 to 52 (PYPSGDLHMGH) match the 'HIGH' region motif. The 'KMSKS' region motif lies at 576–580 (KMSKS). Lys-579 contacts ATP.

This sequence belongs to the class-I aminoacyl-tRNA synthetase family.

It is found in the cytoplasm. It catalyses the reaction tRNA(Leu) + L-leucine + ATP = L-leucyl-tRNA(Leu) + AMP + diphosphate. This Coxiella burnetii (strain Dugway 5J108-111) protein is Leucine--tRNA ligase.